The following is a 184-amino-acid chain: Large ribosomal subunit protein uL5c (184 aa).

Belongs to the universal ribosomal protein uL5 family. As to quaternary structure, part of the 50S ribosomal subunit; contacts the 5S rRNA.

It localises to the plastid. The protein localises to the chloroplast. In terms of biological role, binds 5S rRNA, forms part of the central protuberance of the 50S subunit. This Ostreococcus tauri protein is Large ribosomal subunit protein uL5c (rpl5).